The chain runs to 229 residues: Potassium/proton antiporter CemA (229 aa).

3 helical membrane passes run 7-27 (FTPL…SFSV), 107-127 (ILHF…SILG), and 189-209 (IISG…KYWI).

Belongs to the CemA family.

The protein resides in the plastid. It is found in the chloroplast inner membrane. The enzyme catalyses K(+)(in) + H(+)(out) = K(+)(out) + H(+)(in). Its function is as follows. Contributes to K(+)/H(+) antiport activity by supporting proton efflux to control proton extrusion and homeostasis in chloroplasts in a light-dependent manner to modulate photosynthesis. Prevents excessive induction of non-photochemical quenching (NPQ) under continuous-light conditions. Indirectly promotes efficient inorganic carbon uptake into chloroplasts. In Atropa belladonna (Belladonna), this protein is Potassium/proton antiporter CemA.